A 369-amino-acid chain; its full sequence is Nuclear pore complex-interacting protein family member A7 (369 aa).

A disordered region spans residues 151 to 171; the sequence is SMKEREHREEERQVSEAEENG.

Belongs to the NPIP family.

The protein is Nuclear pore complex-interacting protein family member A7 (NPIPA7) of Homo sapiens (Human).